Reading from the N-terminus, the 311-residue chain is Porphobilinogen deaminase (311 aa).

Cys245 is subject to S-(dipyrrolylmethanemethyl)cysteine.

The protein belongs to the HMBS family. Monomer. Dipyrromethane serves as cofactor.

It carries out the reaction 4 porphobilinogen + H2O = hydroxymethylbilane + 4 NH4(+). It functions in the pathway porphyrin-containing compound metabolism; protoporphyrin-IX biosynthesis; coproporphyrinogen-III from 5-aminolevulinate: step 2/4. Functionally, tetrapolymerization of the monopyrrole PBG into the hydroxymethylbilane pre-uroporphyrinogen in several discrete steps. In Deinococcus deserti (strain DSM 17065 / CIP 109153 / LMG 22923 / VCD115), this protein is Porphobilinogen deaminase.